The chain runs to 168 residues: Ribosome maturation factor RimM (168 aa).

One can recognise a PRC barrel domain in the interval 94–167 (DGQYYYHQII…FVTVELMEGL (74 aa)).

This sequence belongs to the RimM family. Binds ribosomal protein uS19.

It localises to the cytoplasm. An accessory protein needed during the final step in the assembly of 30S ribosomal subunit, possibly for assembly of the head region. Essential for efficient processing of 16S rRNA. May be needed both before and after RbfA during the maturation of 16S rRNA. It has affinity for free ribosomal 30S subunits but not for 70S ribosomes. The chain is Ribosome maturation factor RimM from Limosilactobacillus reuteri (strain DSM 20016) (Lactobacillus reuteri).